Consider the following 258-residue polypeptide: 4-hydroxy-tetrahydrodipicolinate reductase (258 aa).

NAD(+) contacts are provided by residues 8 to 13 (GGSGKM), 86 to 88 (GTT), and 110 to 113 (ATNM). The Proton donor/acceptor role is filled by His142. Residue His143 coordinates (S)-2,3,4,5-tetrahydrodipicolinate. The active-site Proton donor is Lys146. 152 to 153 (GT) contributes to the (S)-2,3,4,5-tetrahydrodipicolinate binding site.

This sequence belongs to the DapB family.

It localises to the cytoplasm. It catalyses the reaction (S)-2,3,4,5-tetrahydrodipicolinate + NAD(+) + H2O = (2S,4S)-4-hydroxy-2,3,4,5-tetrahydrodipicolinate + NADH + H(+). It carries out the reaction (S)-2,3,4,5-tetrahydrodipicolinate + NADP(+) + H2O = (2S,4S)-4-hydroxy-2,3,4,5-tetrahydrodipicolinate + NADPH + H(+). It functions in the pathway amino-acid biosynthesis; L-lysine biosynthesis via DAP pathway; (S)-tetrahydrodipicolinate from L-aspartate: step 4/4. Its function is as follows. Catalyzes the conversion of 4-hydroxy-tetrahydrodipicolinate (HTPA) to tetrahydrodipicolinate. This is 4-hydroxy-tetrahydrodipicolinate reductase from Campylobacter hominis (strain ATCC BAA-381 / DSM 21671 / CCUG 45161 / LMG 19568 / NCTC 13146 / CH001A).